A 248-amino-acid chain; its full sequence is Probable aquaporin TIP2-2 (248 aa).

2 helical membrane-spanning segments follow: residues A21–I41 and A55–G75. The short motif at N84 to A86 is the NPA 1 element. 3 consecutive transmembrane segments (helical) span residues V87 to Q109, L133 to V153, and L168 to G188. An NPA 2 motif is present at residues N196 to A198. Residues Y210–V230 traverse the membrane as a helical segment.

Belongs to the MIP/aquaporin (TC 1.A.8) family. TIP (TC 1.A.8.10) subfamily. Expressed in roots and leaves.

The protein localises to the vacuole membrane. Aquaporins facilitate the transport of water and small neutral solutes across cell membranes. May be involved in transport from the vacuolar compartment to the cytoplasm. This is Probable aquaporin TIP2-2 (TIP2-2) from Oryza sativa subsp. japonica (Rice).